The chain runs to 531 residues: Polygalacturonase (531 aa).

The first 23 residues, 1–23 (MILSHRYTLIALAAAILSSGAHA), serve as a signal peptide directing secretion. The active-site Proton donor is D307. Residue H333 is part of the active site. The segment at 518–531 (AFVPLKSVAPTSPI) is required for PGA export across the outer membrane and catalytic activity.

Belongs to the glycosyl hydrolase 28 family. In terms of assembly, monomer.

It localises to the secreted. The catalysed reaction is (1,4-alpha-D-galacturonosyl)n+m + H2O = (1,4-alpha-D-galacturonosyl)n + (1,4-alpha-D-galacturonosyl)m.. In terms of biological role, contributes to the wilt disease production on tomato. The sequence is that of Polygalacturonase (pglA) from Ralstonia nicotianae (strain ATCC BAA-1114 / GMI1000) (Ralstonia solanacearum).